A 207-amino-acid polypeptide reads, in one-letter code: ATP synthase subunit b 2 (207 aa).

The chain crosses the membrane as a helical span at residues T53 to M72.

The protein belongs to the ATPase B chain family. In terms of assembly, F-type ATPases have 2 components, F(1) - the catalytic core - and F(0) - the membrane proton channel. F(1) has five subunits: alpha(3), beta(3), gamma(1), delta(1), epsilon(1). F(0) has three main subunits: a(1), b(2) and c(10-14). The alpha and beta chains form an alternating ring which encloses part of the gamma chain. F(1) is attached to F(0) by a central stalk formed by the gamma and epsilon chains, while a peripheral stalk is formed by the delta and b chains.

The protein localises to the cell inner membrane. F(1)F(0) ATP synthase produces ATP from ADP in the presence of a proton or sodium gradient. F-type ATPases consist of two structural domains, F(1) containing the extramembraneous catalytic core and F(0) containing the membrane proton channel, linked together by a central stalk and a peripheral stalk. During catalysis, ATP synthesis in the catalytic domain of F(1) is coupled via a rotary mechanism of the central stalk subunits to proton translocation. In terms of biological role, component of the F(0) channel, it forms part of the peripheral stalk, linking F(1) to F(0). The b'-subunit is a diverged and duplicated form of b found in plants and photosynthetic bacteria. This Rhizobium etli (strain CIAT 652) protein is ATP synthase subunit b 2 (atpF2).